A 104-amino-acid polypeptide reads, in one-letter code: Protamine-2 (104 aa).

A phosphoserine mark is found at serine 8 and serine 10. The disordered stretch occupies residues 23–104 (WQEQGRNGQE…SRRRRRCRRY (82 aa)). Residues 24–35 (QEQGRNGQEEQG) are compositionally biased toward low complexity. Position 37 is a phosphoserine (serine 37). The span at 54–104 (YRRRRCSRRRRYRIHRRRSRSCRRRRRRSCRYRRRPRRGCRSRRRRRCRRY) shows a compositional bias: basic residues.

This sequence belongs to the protamine P2 family. Interacts with TDRP. In terms of processing, proteolytic processing into mature chains is required for histone eviction during spermatogenesis. Transition proteins (TNP1 and TNP2) are required for processing. As to expression, testis.

The protein resides in the nucleus. It localises to the chromosome. In terms of biological role, protamines substitute for histones in the chromatin of sperm during the haploid phase of spermatogenesis. They compact sperm DNA into a highly condensed, stable and inactive complex. This chain is Protamine-2 (PRM2), found in Callithrix jacchus (White-tufted-ear marmoset).